We begin with the raw amino-acid sequence, 153 residues long: Ribosomal RNA large subunit methyltransferase H (153 aa).

S-adenosyl-L-methionine is bound by residues Leu-70, Gly-102, and 121 to 126 (LSSMTF).

The protein belongs to the RNA methyltransferase RlmH family. As to quaternary structure, homodimer.

It is found in the cytoplasm. The enzyme catalyses pseudouridine(1915) in 23S rRNA + S-adenosyl-L-methionine = N(3)-methylpseudouridine(1915) in 23S rRNA + S-adenosyl-L-homocysteine + H(+). Specifically methylates the pseudouridine at position 1915 (m3Psi1915) in 23S rRNA. This is Ribosomal RNA large subunit methyltransferase H from Dictyoglomus thermophilum (strain ATCC 35947 / DSM 3960 / H-6-12).